Reading from the N-terminus, the 577-residue chain is Dihydroxy-acid dehydratase (577 aa).

Residues 1–10 (MLKRSFDKSK) show a composition bias toward basic and acidic residues. Positions 1–22 (MLKRSFDKSKLPSRHVTEGPSR) are disordered. Residue C56 coordinates [2Fe-2S] cluster. Mg(2+) is bound at residue D88. C129 is a binding site for [2Fe-2S] cluster. Residues D130 and K131 each contribute to the Mg(2+) site. K131 carries the post-translational modification N6-carboxylysine. Residue C201 coordinates [2Fe-2S] cluster. E453 is a Mg(2+) binding site. The active-site Proton acceptor is S479.

It belongs to the IlvD/Edd family. In terms of assembly, homodimer. The cofactor is [2Fe-2S] cluster. Requires Mg(2+) as cofactor.

The catalysed reaction is (2R)-2,3-dihydroxy-3-methylbutanoate = 3-methyl-2-oxobutanoate + H2O. It catalyses the reaction (2R,3R)-2,3-dihydroxy-3-methylpentanoate = (S)-3-methyl-2-oxopentanoate + H2O. It functions in the pathway amino-acid biosynthesis; L-isoleucine biosynthesis; L-isoleucine from 2-oxobutanoate: step 3/4. Its pathway is amino-acid biosynthesis; L-valine biosynthesis; L-valine from pyruvate: step 3/4. In terms of biological role, functions in the biosynthesis of branched-chain amino acids. Catalyzes the dehydration of (2R,3R)-2,3-dihydroxy-3-methylpentanoate (2,3-dihydroxy-3-methylvalerate) into 2-oxo-3-methylpentanoate (2-oxo-3-methylvalerate) and of (2R)-2,3-dihydroxy-3-methylbutanoate (2,3-dihydroxyisovalerate) into 2-oxo-3-methylbutanoate (2-oxoisovalerate), the penultimate precursor to L-isoleucine and L-valine, respectively. The chain is Dihydroxy-acid dehydratase from Dinoroseobacter shibae (strain DSM 16493 / NCIMB 14021 / DFL 12).